The following is a 748-amino-acid chain: Phosphoribosylformylglycinamidine synthase subunit PurL (748 aa).

H47 is a catalytic residue. ATP-binding residues include Y50 and K90. E92 contacts Mg(2+). Substrate is bound by residues 93-96 (SHNH) and R115. The active-site Proton acceptor is H94. D116 is a binding site for Mg(2+). Q240 serves as a coordination point for substrate. D268 provides a ligand contact to Mg(2+). 312–314 (ESQ) provides a ligand contact to substrate. ATP contacts are provided by N500 and G537. N538 provides a ligand contact to Mg(2+). S540 serves as a coordination point for substrate.

This sequence belongs to the FGAMS family. As to quaternary structure, monomer. Part of the FGAM synthase complex composed of 1 PurL, 1 PurQ and 2 PurS subunits.

Its subcellular location is the cytoplasm. The catalysed reaction is N(2)-formyl-N(1)-(5-phospho-beta-D-ribosyl)glycinamide + L-glutamine + ATP + H2O = 2-formamido-N(1)-(5-O-phospho-beta-D-ribosyl)acetamidine + L-glutamate + ADP + phosphate + H(+). It participates in purine metabolism; IMP biosynthesis via de novo pathway; 5-amino-1-(5-phospho-D-ribosyl)imidazole from N(2)-formyl-N(1)-(5-phospho-D-ribosyl)glycinamide: step 1/2. Part of the phosphoribosylformylglycinamidine synthase complex involved in the purines biosynthetic pathway. Catalyzes the ATP-dependent conversion of formylglycinamide ribonucleotide (FGAR) and glutamine to yield formylglycinamidine ribonucleotide (FGAM) and glutamate. The FGAM synthase complex is composed of three subunits. PurQ produces an ammonia molecule by converting glutamine to glutamate. PurL transfers the ammonia molecule to FGAR to form FGAM in an ATP-dependent manner. PurS interacts with PurQ and PurL and is thought to assist in the transfer of the ammonia molecule from PurQ to PurL. The chain is Phosphoribosylformylglycinamidine synthase subunit PurL from Leptospira biflexa serovar Patoc (strain Patoc 1 / Ames).